The sequence spans 405 residues: Chalcone synthase (405 aa).

Cys-170 is an active-site residue.

The protein belongs to the thiolase-like superfamily. Chalcone/stilbene synthases family.

The enzyme catalyses (E)-4-coumaroyl-CoA + 3 malonyl-CoA + 3 H(+) = 2',4,4',6'-tetrahydroxychalcone + 3 CO2 + 4 CoA. It functions in the pathway secondary metabolite biosynthesis; flavonoid biosynthesis. Functionally, the primary product of this enzyme is 4,2',4',6'-tetrahydroxychalcone (also termed naringenin-chalcone or chalcone) which can under specific conditions spontaneously isomerize into naringenin. The protein is Chalcone synthase (CHS) of Equisetum arvense (Field horsetail).